The following is a 266-amino-acid chain: Ubiquinone biosynthesis protein COQ4 homolog, mitochondrial (266 aa).

Zn(2+) contacts are provided by histidine 169, aspartate 170, histidine 173, and glutamate 185.

The protein belongs to the COQ4 family. Component of a multi-subunit COQ enzyme complex. Requires Zn(2+) as cofactor.

Its subcellular location is the mitochondrion inner membrane. The catalysed reaction is a 4-hydroxy-3-methoxy-5-(all-trans-polyprenyl)benzoate + H(+) = a 2-methoxy-6-(all-trans-polyprenyl)phenol + CO2. The protein operates within cofactor biosynthesis; ubiquinone biosynthesis. Lyase that catalyzes the C1-decarboxylation of 4-hydroxy-3-methoxy-5-(all-trans-polyprenyl)benzoic acid into 2-methoxy-6-(all-trans-polyprenyl)phenol during ubiquinone biosynthesis. In Drosophila ananassae (Fruit fly), this protein is Ubiquinone biosynthesis protein COQ4 homolog, mitochondrial.